We begin with the raw amino-acid sequence, 61 residues long: Small ribosomal subunit protein uS14 (61 aa).

Cysteine 24, cysteine 27, cysteine 40, and cysteine 43 together coordinate Zn(2+).

This sequence belongs to the universal ribosomal protein uS14 family. Zinc-binding uS14 subfamily. Part of the 30S ribosomal subunit. Contacts proteins S3 and S10. Zn(2+) is required as a cofactor.

Binds 16S rRNA, required for the assembly of 30S particles and may also be responsible for determining the conformation of the 16S rRNA at the A site. In Desulfatibacillum aliphaticivorans, this protein is Small ribosomal subunit protein uS14.